The following is a 343-amino-acid chain: Probable dolichyl-diphosphooligosaccharide--protein glycosyltransferase subunit 3A (343 aa).

Positions 1–22 are cleaved as a signal peptide; the sequence is MVIQTNLSYRFFILIVFLFTLA. Over 23–185 the chain is Lumenal; that stretch reads NPKSDSDLKN…TVCSIQRPPL (163 aa). N-linked (GlcNAc...) asparagine glycosylation is found at asparagine 105, asparagine 108, and asparagine 146. A helical membrane pass occupies residues 186-206; that stretch reads ISKTQIGIIVAIIIISTPILI. Over 207–220 the chain is Cytoplasmic; it reads KKILKGETLLHDHR. Residues 221–241 traverse the membrane as a helical segment; that stretch reads IWLVGAVFVYFFSVSGTMHNI. Topologically, residues 242 to 273 are lumenal; that stretch reads IREMPMYIKDYEDSSKFVFFIEESEMQLGAEG. Residues 274-294 form a helical membrane-spanning segment; that stretch reads FFVGFLYTVVGLLLAFVTNVV. Residues 295-304 lie on the Cytoplasmic side of the membrane; it reads VRVKKLDEQR. The chain crosses the membrane as a helical span at residues 305–325; the sequence is MAMLLALSISFWAVRKVVYLD. Residues 326–343 lie on the Lumenal side of the membrane; the sequence is NWKTGYEIYPYWPSSWRG.

The protein belongs to the OST3/OST6 family. Component of the oligosaccharyltransferase (OST) complex.

It is found in the endoplasmic reticulum membrane. Its function is as follows. Subunit of the oligosaccharyl transferase (OST) complex that catalyzes the initial transfer of a defined glycan (Glc(3)Man(9)GlcNAc(2) in eukaryotes) from the lipid carrier dolichol-pyrophosphate to an asparagine residue within an Asn-X-Ser/Thr consensus motif in nascent polypeptide chains, the first step in protein N-glycosylation. N-glycosylation occurs cotranslationally and the complex associates with the Sec61 complex at the channel-forming translocon complex that mediates protein translocation across the endoplasmic reticulum (ER). All subunits are required for a maximal enzyme activity. In Arabidopsis thaliana (Mouse-ear cress), this protein is Probable dolichyl-diphosphooligosaccharide--protein glycosyltransferase subunit 3A (OST3A).